A 116-amino-acid polypeptide reads, in one-letter code: Vesicle-associated membrane protein 5 (116 aa).

Residues 1–72 (MAGIELERCQ…CWENIRYRIC (72 aa)) lie on the Cytoplasmic side of the membrane. A v-SNARE coiled-coil homology domain is found at 5–65 (ELERCQQQAN…QNLAQKKCWE (61 aa)). A phosphoserine mark is found at Ser41, Ser48, and Ser49. A helical; Anchor for type IV membrane protein membrane pass occupies residues 73 to 93 (VGLVVVGVLLIILIVLLVVFL). Over 94 to 116 (PQSSDSSSAPRTQDAGIASGPGN) the chain is Vesicular. The tract at residues 96–116 (SSDSSSAPRTQDAGIASGPGN) is disordered.

The protein belongs to the synaptobrevin family. Post-translationally, (Microbial infection) Targeted and hydrolyzed by C.botulinum neurotoxin type X (BoNT/X) which hydrolyzes the 40-Arg-|-Ser-41 bond and probably inhibits neurotransmitter release. It remains unknown whether BoNT/X is ever produced, or what organisms it targets.

It is found in the cell membrane. The protein resides in the endomembrane system. The protein localises to the golgi apparatus. Its subcellular location is the trans-Golgi network membrane. In terms of biological role, may participate in trafficking events that are associated with myogenesis, such as myoblast fusion and/or GLUT4 trafficking. This Homo sapiens (Human) protein is Vesicle-associated membrane protein 5 (VAMP5).